The primary structure comprises 403 residues: Glucose-signaling factor 2 (403 aa).

The Lumenal segment spans residues 1–177 (MEIYIRLNAD…QEVQANYSSL (177 aa)). N-linked (GlcNAc...) asparagine glycans are attached at residues Asn-89 and Asn-173. A helical; Signal-anchor for type II membrane protein transmembrane segment spans residues 178-198 (VAQWLFFVMHIFKVGIITLFL). The Cytoplasmic portion of the chain corresponds to 199 to 403 (KLGIANPISF…IKKNDLKKSN (205 aa)). The stretch at 330–388 (ELENNLKKILEEYDGDIGKMNAEIRRFRRFGIYEPDEKLASLVKLRREIADEKEKASNN) forms a coiled coil.

It is found in the endoplasmic reticulum membrane. Functionally, may be involved in the secretion of hexose transporters from the endoplasmic reticulum. Involved in secretion of GAL2 and HXT1. This chain is Glucose-signaling factor 2 (GSF2), found in Saccharomyces cerevisiae (strain ATCC 204508 / S288c) (Baker's yeast).